Reading from the N-terminus, the 374-residue chain is PqqA peptide cyclase (374 aa).

In terms of domain architecture, Radical SAM core spans 13 to 230 (VPAPIAMLAE…EAEARLRGTL (218 aa)). Residues cysteine 27, cysteine 31, and cysteine 34 each contribute to the [4Fe-4S] cluster site.

It belongs to the radical SAM superfamily. PqqE family. Interacts with PqqD. The interaction is necessary for activity of PqqE. Requires [4Fe-4S] cluster as cofactor.

It carries out the reaction [PQQ precursor protein] + S-adenosyl-L-methionine = E-Y cross-linked-[PQQ precursor protein] + 5'-deoxyadenosine + L-methionine + H(+). It functions in the pathway cofactor biosynthesis; pyrroloquinoline quinone biosynthesis. In terms of biological role, catalyzes the cross-linking of a glutamate residue and a tyrosine residue in the PqqA protein as part of the biosynthesis of pyrroloquinoline quinone (PQQ). The sequence is that of PqqA peptide cyclase from Ruegeria pomeroyi (strain ATCC 700808 / DSM 15171 / DSS-3) (Silicibacter pomeroyi).